The following is a 251-amino-acid chain: Imidazole glycerol phosphate synthase subunit HisF (251 aa).

Active-site residues include Asp-11 and Asp-130.

This sequence belongs to the HisA/HisF family. Heterodimer of HisH and HisF.

It is found in the cytoplasm. It catalyses the reaction 5-[(5-phospho-1-deoxy-D-ribulos-1-ylimino)methylamino]-1-(5-phospho-beta-D-ribosyl)imidazole-4-carboxamide + L-glutamine = D-erythro-1-(imidazol-4-yl)glycerol 3-phosphate + 5-amino-1-(5-phospho-beta-D-ribosyl)imidazole-4-carboxamide + L-glutamate + H(+). It participates in amino-acid biosynthesis; L-histidine biosynthesis; L-histidine from 5-phospho-alpha-D-ribose 1-diphosphate: step 5/9. IGPS catalyzes the conversion of PRFAR and glutamine to IGP, AICAR and glutamate. The HisF subunit catalyzes the cyclization activity that produces IGP and AICAR from PRFAR using the ammonia provided by the HisH subunit. The chain is Imidazole glycerol phosphate synthase subunit HisF from Thiobacillus denitrificans (strain ATCC 25259 / T1).